Consider the following 316-residue polypeptide: 4-hydroxy-3-methylbut-2-enyl diphosphate reductase (316 aa).

[4Fe-4S] cluster is bound at residue cysteine 12. (2E)-4-hydroxy-3-methylbut-2-enyl diphosphate-binding residues include histidine 41 and histidine 74. Residues histidine 41 and histidine 74 each contribute to the dimethylallyl diphosphate site. Isopentenyl diphosphate contacts are provided by histidine 41 and histidine 74. Residue cysteine 96 coordinates [4Fe-4S] cluster. Histidine 124 contacts (2E)-4-hydroxy-3-methylbut-2-enyl diphosphate. Residue histidine 124 participates in dimethylallyl diphosphate binding. Isopentenyl diphosphate is bound at residue histidine 124. The active-site Proton donor is the glutamate 126. Residue threonine 169 coordinates (2E)-4-hydroxy-3-methylbut-2-enyl diphosphate. Cysteine 199 lines the [4Fe-4S] cluster pocket. Serine 227, serine 228, asparagine 229, and serine 271 together coordinate (2E)-4-hydroxy-3-methylbut-2-enyl diphosphate. 4 residues coordinate dimethylallyl diphosphate: serine 227, serine 228, asparagine 229, and serine 271. Isopentenyl diphosphate is bound by residues serine 227, serine 228, asparagine 229, and serine 271.

The protein belongs to the IspH family. [4Fe-4S] cluster serves as cofactor.

The enzyme catalyses isopentenyl diphosphate + 2 oxidized [2Fe-2S]-[ferredoxin] + H2O = (2E)-4-hydroxy-3-methylbut-2-enyl diphosphate + 2 reduced [2Fe-2S]-[ferredoxin] + 2 H(+). It carries out the reaction dimethylallyl diphosphate + 2 oxidized [2Fe-2S]-[ferredoxin] + H2O = (2E)-4-hydroxy-3-methylbut-2-enyl diphosphate + 2 reduced [2Fe-2S]-[ferredoxin] + 2 H(+). The protein operates within isoprenoid biosynthesis; dimethylallyl diphosphate biosynthesis; dimethylallyl diphosphate from (2E)-4-hydroxy-3-methylbutenyl diphosphate: step 1/1. It functions in the pathway isoprenoid biosynthesis; isopentenyl diphosphate biosynthesis via DXP pathway; isopentenyl diphosphate from 1-deoxy-D-xylulose 5-phosphate: step 6/6. Its function is as follows. Catalyzes the conversion of 1-hydroxy-2-methyl-2-(E)-butenyl 4-diphosphate (HMBPP) into a mixture of isopentenyl diphosphate (IPP) and dimethylallyl diphosphate (DMAPP). Acts in the terminal step of the DOXP/MEP pathway for isoprenoid precursor biosynthesis. This Xanthomonas campestris pv. campestris (strain ATCC 33913 / DSM 3586 / NCPPB 528 / LMG 568 / P 25) protein is 4-hydroxy-3-methylbut-2-enyl diphosphate reductase.